Reading from the N-terminus, the 98-residue chain is NADH-ubiquinone oxidoreductase chain 4L (98 aa).

3 helical membrane-spanning segments follow: residues 1 to 21, 29 to 49, and 61 to 81; these read MSLV…GLLM, ALLC…LTIL, and IILL…LVMI.

It belongs to the complex I subunit 4L family. As to quaternary structure, core subunit of respiratory chain NADH dehydrogenase (Complex I) which is composed of 45 different subunits.

It is found in the mitochondrion inner membrane. The catalysed reaction is a ubiquinone + NADH + 5 H(+)(in) = a ubiquinol + NAD(+) + 4 H(+)(out). Core subunit of the mitochondrial membrane respiratory chain NADH dehydrogenase (Complex I) which catalyzes electron transfer from NADH through the respiratory chain, using ubiquinone as an electron acceptor. Part of the enzyme membrane arm which is embedded in the lipid bilayer and involved in proton translocation. This is NADH-ubiquinone oxidoreductase chain 4L (MT-ND4L) from Delphinapterus leucas (Beluga whale).